Here is a 246-residue protein sequence, read N- to C-terminus: Large ribosomal subunit protein uL30-like 1 (246 aa).

Position 54 is a phosphoserine (serine 54).

The protein belongs to the universal ribosomal protein uL30 family.

The polypeptide is Large ribosomal subunit protein uL30-like 1 (Rpl7l1) (Mus musculus (Mouse)).